Reading from the N-terminus, the 377-residue chain is Nitric oxide reductase FlRd-NAD(+) reductase (377 aa).

Belongs to the FAD-dependent oxidoreductase family. It depends on FAD as a cofactor.

The protein localises to the cytoplasm. The catalysed reaction is 2 reduced [nitric oxide reductase rubredoxin domain] + NAD(+) + H(+) = 2 oxidized [nitric oxide reductase rubredoxin domain] + NADH. It functions in the pathway nitrogen metabolism; nitric oxide reduction. One of at least two accessory proteins for anaerobic nitric oxide (NO) reductase. Reduces the rubredoxin moiety of NO reductase. In Salmonella typhi, this protein is Nitric oxide reductase FlRd-NAD(+) reductase.